Consider the following 239-residue polypeptide: Mediator of RNA polymerase II transcription subunit 4 (239 aa).

Residues 168–221 (QLFSEQPPKTNEPTETETEIDANKAVEEKTKMNYPASPTFTTQEENKEVESPAN) form a disordered region. Residues 188 to 198 (DANKAVEEKTK) show a composition bias toward basic and acidic residues. A phosphoserine mark is found at S204 and S218.

It belongs to the Mediator complex subunit 4 family. As to quaternary structure, component of the Mediator complex.

It localises to the nucleus. In terms of biological role, component of the Mediator complex, a coactivator involved in the regulated transcription of nearly all RNA polymerase II-dependent genes. Mediator functions as a bridge to convey information from gene-specific regulatory proteins to the basal RNA polymerase II transcription machinery. Mediator is recruited to promoters by direct interactions with regulatory proteins and serves as a scaffold for the assembly of a functional preinitiation complex with RNA polymerase II and the general transcription factors. In Schizosaccharomyces pombe (strain 972 / ATCC 24843) (Fission yeast), this protein is Mediator of RNA polymerase II transcription subunit 4 (med4).